The following is a 537-amino-acid chain: Beta-arabinofuranosyltransferase RAY1 (537 aa).

A DXD motif motif is present at residues 370–372 (DVD).

Belongs to the glycosyltransferase 77 family.

Functionally, beta-arabinofuranosyltransferase that transfers specifically an arabinosyl residue from UDP-arabinofuranose to the monosaccharide galactose or beta-methyl-galactoside in vitro. Catalyzes the addition of a beta-arabinofuranose residue onto a beta-galactosyl residue of an Yariv-precipitable wall polymer in vivo. This Arabidopsis thaliana (Mouse-ear cress) protein is Beta-arabinofuranosyltransferase RAY1.